Reading from the N-terminus, the 585-residue chain is Cyclic nucleotide-binding domain-containing protein 2 (585 aa).

116–239 (SYRNYAEPLQ…DAQYRFEFFR (124 aa)) is an a nucleoside 3',5'-cyclic phosphate binding site.

Its subcellular location is the cytoplasm. It is found in the cytosol. In terms of biological role, essential for male fertility. Plays an important role in spermatogenesis and regulates sperm motility by controlling the development of the flagellar bending of sperm. The sequence is that of Cyclic nucleotide-binding domain-containing protein 2 (CNBD2) from Macaca fascicularis (Crab-eating macaque).